The chain runs to 147 residues: Delta-latroinsectotoxin-Lhe1a (147 aa).

ANK repeat units lie at residues 57–59 (VSI), 66–78 (NNWTPLHFAIYFK), 79–96 (KNPAVSAVLILENKDIEA), and 98–125 (TSIMLIVQKLLLELYNYFINNYAETLDE).

The protein belongs to the cationic peptide 01 (latrotoxin) family. 04 (delta-latroinsectotoxin) subfamily. In terms of assembly, homotetramer in membrane. In terms of tissue distribution, expressed by the venom gland.

The protein resides in the secreted. It is found in the target cell membrane. Functionally, insecticidal presynaptic neurotoxin that induces massive neurotransmitter release at insect (but not vertebrate) neuromuscular junctions. Native toxin forms cation-permeable pores (with high permeability to calcium) in lipid membranes locust muscle membrane and artificial lipid bilayers. May bind to insect neurexin-1 homolog, insect adhesion G protein-coupled receptor L1 homolog, and insect receptor-type tyrosine-protein phosphatase S homolog, and induces neurotransmitter exocytosis both by forming tetrameric pores in membranes and signaling via G protein-coupled receptor. Oligomerization is a process independent of divalent cations. The polypeptide is Delta-latroinsectotoxin-Lhe1a (Latrodectus hesperus (Western black widow spider)).